Consider the following 382-residue polypeptide: Carbamoyl phosphate synthase small chain (382 aa).

A CPSase region spans residues 1 to 189; that stretch reads MIKSALLVLE…GLPEAKKEDE (189 aa). Residues serine 47, glycine 241, and glycine 243 each contribute to the L-glutamine site. The Glutamine amidotransferase type-1 domain maps to 193 to 380; it reads HVVAYDFGAK…IELIEQYRKT (188 aa). The active-site Nucleophile is the cysteine 269. The L-glutamine site is built by leucine 270, glutamine 273, asparagine 311, glycine 313, and phenylalanine 314. Active-site residues include histidine 353 and glutamate 355.

Belongs to the CarA family. Composed of two chains; the small (or glutamine) chain promotes the hydrolysis of glutamine to ammonia, which is used by the large (or ammonia) chain to synthesize carbamoyl phosphate. Tetramer of heterodimers (alpha,beta)4.

The enzyme catalyses hydrogencarbonate + L-glutamine + 2 ATP + H2O = carbamoyl phosphate + L-glutamate + 2 ADP + phosphate + 2 H(+). The catalysed reaction is L-glutamine + H2O = L-glutamate + NH4(+). It functions in the pathway amino-acid biosynthesis; L-arginine biosynthesis; carbamoyl phosphate from bicarbonate: step 1/1. It participates in pyrimidine metabolism; UMP biosynthesis via de novo pathway; (S)-dihydroorotate from bicarbonate: step 1/3. Its function is as follows. Small subunit of the glutamine-dependent carbamoyl phosphate synthetase (CPSase). CPSase catalyzes the formation of carbamoyl phosphate from the ammonia moiety of glutamine, carbonate, and phosphate donated by ATP, constituting the first step of 2 biosynthetic pathways, one leading to arginine and/or urea and the other to pyrimidine nucleotides. The small subunit (glutamine amidotransferase) binds and cleaves glutamine to supply the large subunit with the substrate ammonia. In Escherichia coli O157:H7, this protein is Carbamoyl phosphate synthase small chain.